Reading from the N-terminus, the 980-residue chain is Putative leucine-rich repeat receptor-like serine/threonine-protein kinase At2g24130 (980 aa).

The first 20 residues, 1 to 20 (MDYCSLLVVSFLITVMTVLA), serve as a signal peptide directing secretion. At 21–593 (SKENDHELIK…ACKKKHKYPS (573 aa)) the chain is on the extracellular side. 2 N-linked (GlcNAc...) asparagine glycosylation sites follow: Asn-55 and Asn-88. LRR repeat units follow at residues 65 to 89 (STQVIELDISGRDLGGEISPSIANL), 90 to 113 (TGLTVLDLSRNFFVGKIPPEIGSL), 115 to 138 (ETLKQLSLSENLLHGNIPQELGLL), 139 to 162 (NRLVYLDLGSNRLNGSIPVQLFCN), 165 to 189 (SSSLQYIDLSNNSLTGEIPLNYHCH), 191 to 214 (KELRFLLLWSNKLTGTVPSSLSNS), 215 to 238 (TNLKWMDLESNMLSGELPSQVISK), and 240 to 263 (PQLQFLYLSYNHFVSHNNNTNLEP). 4 N-linked (GlcNAc...) asparagine glycosylation sites follow: Asn-152, Asn-162, Asn-175, and Asn-213. N-linked (GlcNAc...) asparagine glycosylation is found at Asn-257 and Asn-270. LRR repeat units follow at residues 271–295 (SSDLQELELAGNSLGGEITSSVRHL), 296–320 (SVNLVQIHLDQNRIHGSIPPEISNL), 322–344 (NLTLLNLSSNLLSGPIPRELCKL), 345–370 (SKLERVYLSNNHLTGEIPMELGDIPR), 372–391 (GLLDVSRNNLSGSIPDSFGN), 392–416 (LSQLRRLLLYGNHLSGTVPQSLGKC), 417–440 (INLEILDLSHNNLTGTIPVEVVSN), 442–463 (RNLKLYLNLSSNHLSGPIPLEL), 464–490 (SKMDMVLSVDLSSNELSGKIPPQLGSC), 491–514 (IALEHLNLSRNGFSSTLPSSLGQL), 515–537 (PYLKELDVSFNRLTGAIPPSFQQ), and 539–563 (STLKHLNFSFNLLSGNVSDKGSFSK). 2 N-linked (GlcNAc...) asparagine glycosylation sites follow: Asn-322 and Asn-327. Asn-380 and Asn-391 each carry an N-linked (GlcNAc...) asparagine glycan. 2 N-linked (GlcNAc...) asparagine glycosylation sites follow: Asn-428 and Asn-449. Residue Asn-497 is glycosylated (N-linked (GlcNAc...) asparagine). Residues Asn-545 and Asn-554 are each glycosylated (N-linked (GlcNAc...) asparagine). A helical transmembrane segment spans residues 594–614 (VLLPVLLSLIATPVLCVFGYP). The Cytoplasmic portion of the chain corresponds to 615–980 (LVQRSRFGKN…SQETQGEASS (366 aa)). Thr-658 is modified (phosphothreonine). The 300-residue stretch at 661 to 960 (FNASSLIGSG…HEMGRLKEYL (300 aa)) folds into the Protein kinase domain. ATP contacts are provided by residues 667 to 675 (IGSGRFGHV) and Lys-689. Phosphotyrosine is present on Tyr-775. The active-site Proton acceptor is the Asp-788. Tyr-841 bears the Phosphotyrosine mark.

Belongs to the protein kinase superfamily. Ser/Thr protein kinase family.

The protein localises to the cell membrane. It carries out the reaction L-seryl-[protein] + ATP = O-phospho-L-seryl-[protein] + ADP + H(+). The enzyme catalyses L-threonyl-[protein] + ATP = O-phospho-L-threonyl-[protein] + ADP + H(+). The protein is Putative leucine-rich repeat receptor-like serine/threonine-protein kinase At2g24130 of Arabidopsis thaliana (Mouse-ear cress).